Here is a 941-residue protein sequence, read N- to C-terminus: Probable lipoxygenase 8, chloroplastic (941 aa).

2 disordered regions span residues 1 to 22 (MLRP…SSSS) and 45 to 68 (LIAG…VVRC). The N-terminal 67 residues, 1-67 (MLRPQLNPSS…QQGRQRVVVR (67 aa)), are a transit peptide targeting the chloroplast. Residues 100–236 (AVATIKVTVE…SIDEGTPGKR (137 aa)) form the PLAT domain. The Lipoxygenase domain maps to 242 to 941 (AYLPGQTPAG…GMGIPNSTSI (700 aa)). Disordered regions lie at residues 255–274 (YREE…READ) and 288–331 (NPDS…RKGN). Basic and acidic residues predominate over residues 319-331 (SKKDPKSETRKGN). Fe cation-binding residues include H598, H603, H790, N794, and I941.

It belongs to the lipoxygenase family. The cofactor is Fe cation.

It is found in the plastid. Its subcellular location is the chloroplast. It carries out the reaction (9Z,12Z)-octadecadienoate + O2 = (13S)-hydroperoxy-(9Z,11E)-octadecadienoate. The enzyme catalyses (9Z,12Z,15Z)-octadecatrienoate + O2 = (13S)-hydroperoxy-(9Z,11E,15Z)-octadecatrienoate. It functions in the pathway lipid metabolism; oxylipin biosynthesis. In terms of biological role, plant lipoxygenase may be involved in a number of diverse aspects of plant physiology including growth and development, pest resistance, and senescence or responses to wounding. It catalyzes the hydroperoxidation of lipids containing a cis,cis-1,4-pentadiene structure. This Oryza sativa subsp. japonica (Rice) protein is Probable lipoxygenase 8, chloroplastic (CM-LOX2).